The sequence spans 143 residues: Ribosome-binding factor A (143 aa).

Residues 119-143 are disordered; the sequence is KAKQQQFTPDTPDNSESVDGEKEQD. The segment covering 122-133 has biased composition (polar residues); it reads QQQFTPDTPDNS.

It belongs to the RbfA family. As to quaternary structure, monomer. Binds 30S ribosomal subunits, but not 50S ribosomal subunits or 70S ribosomes.

The protein localises to the cytoplasm. One of several proteins that assist in the late maturation steps of the functional core of the 30S ribosomal subunit. Associates with free 30S ribosomal subunits (but not with 30S subunits that are part of 70S ribosomes or polysomes). Required for efficient processing of 16S rRNA. May interact with the 5'-terminal helix region of 16S rRNA. This Shewanella frigidimarina (strain NCIMB 400) protein is Ribosome-binding factor A.